The primary structure comprises 84 residues: Small ribosomal subunit protein uS17 (84 aa).

It belongs to the universal ribosomal protein uS17 family. In terms of assembly, part of the 30S ribosomal subunit.

Functionally, one of the primary rRNA binding proteins, it binds specifically to the 5'-end of 16S ribosomal RNA. The polypeptide is Small ribosomal subunit protein uS17 (Clostridium botulinum (strain Eklund 17B / Type B)).